The sequence spans 309 residues: Foldase protein PrsA 2 (309 aa).

Residues 1-22 form the signal peptide; that stretch reads MKQMNKLITGVVTLATVVTLSA. The N-palmitoyl cysteine moiety is linked to residue Cys23. Cys23 carries S-diacylglycerol cysteine lipidation. The region spanning 146–241 is the PpiC domain; that stretch reads TPTMTAEIMQ…RTYHIIKVTK (96 aa).

The protein belongs to the PrsA family.

Its subcellular location is the cell membrane. The catalysed reaction is [protein]-peptidylproline (omega=180) = [protein]-peptidylproline (omega=0). Functionally, plays a major role in protein secretion by helping the post-translocational extracellular folding of several secreted proteins. The protein is Foldase protein PrsA 2 of Streptococcus pyogenes serotype M6 (strain ATCC BAA-946 / MGAS10394).